Reading from the N-terminus, the 820-residue chain is Serine/threonine-protein phosphatase 4 regulatory subunit 3 (820 aa).

Positions 1 to 100 (MSDTRRRVKV…DEIWEKICQV (100 aa)) constitute a WH1 domain. Disordered regions lie at residues 687-711 (EDEE…DFPE) and 750-820 (AANG…RLGS). Over residues 701–711 (EKTKTEDDFPE) the composition is skewed to basic and acidic residues. The span at 750–761 (AANGANSTNSKS) shows a compositional bias: polar residues. Residues 770–784 (SSNGSSSKNTSLTTT) are compositionally biased toward low complexity. Residues 798-809 (YPDDEDEEEEED) are compositionally biased toward acidic residues.

This sequence belongs to the SMEK family. In terms of assembly, serine/threonine-protein phosphatase 4 (PP4) occurs in different assemblies of the catalytic and one or more regulatory subunits.

Regulatory subunit of serine/threonine-protein phosphatase 4 (PP4). This chain is Serine/threonine-protein phosphatase 4 regulatory subunit 3, found in Xenopus tropicalis (Western clawed frog).